The following is a 63-amino-acid chain: Overexpressed in colon carcinoma 1 protein homolog (63 aa).

Residues 1 to 12 (MGCGNSTAASAG) are compositionally biased toward low complexity. The disordered stretch occupies residues 1-40 (MGCGNSTAASAGAGQGPAGAAKDVTEESITEDDKRRNYGG).

It belongs to the OCC1 family.

This Bos taurus (Bovine) protein is Overexpressed in colon carcinoma 1 protein homolog.